A 94-amino-acid chain; its full sequence is Small ribosomal subunit protein bS6 (94 aa).

The protein belongs to the bacterial ribosomal protein bS6 family.

Binds together with bS18 to 16S ribosomal RNA. This is Small ribosomal subunit protein bS6 from Akkermansia muciniphila (strain ATCC BAA-835 / DSM 22959 / JCM 33894 / BCRC 81048 / CCUG 64013 / CIP 107961 / Muc).